The following is a 157-amino-acid chain: SsrA-binding protein (157 aa).

The segment at 131–157 (KQLHDKRESVKQRDWQRDKARLMRDKG) is disordered. A compositionally biased stretch (basic and acidic residues) spans 132 to 157 (QLHDKRESVKQRDWQRDKARLMRDKG).

It belongs to the SmpB family.

The protein localises to the cytoplasm. In terms of biological role, required for rescue of stalled ribosomes mediated by trans-translation. Binds to transfer-messenger RNA (tmRNA), required for stable association of tmRNA with ribosomes. tmRNA and SmpB together mimic tRNA shape, replacing the anticodon stem-loop with SmpB. tmRNA is encoded by the ssrA gene; the 2 termini fold to resemble tRNA(Ala) and it encodes a 'tag peptide', a short internal open reading frame. During trans-translation Ala-aminoacylated tmRNA acts like a tRNA, entering the A-site of stalled ribosomes, displacing the stalled mRNA. The ribosome then switches to translate the ORF on the tmRNA; the nascent peptide is terminated with the 'tag peptide' encoded by the tmRNA and targeted for degradation. The ribosome is freed to recommence translation, which seems to be the essential function of trans-translation. The chain is SsrA-binding protein from Methylorubrum populi (strain ATCC BAA-705 / NCIMB 13946 / BJ001) (Methylobacterium populi).